The chain runs to 294 residues: Acetyl-coenzyme A carboxylase carboxyl transferase subunit beta (294 aa).

Residues 29 to 294 enclose the CoA carboxyltransferase N-terminal domain; sequence LWEKCPECGQ…TQVVKLQTNA (266 aa). Zn(2+) is bound by residues cysteine 33, cysteine 36, cysteine 52, and cysteine 55. The C4-type zinc-finger motif lies at 33–55; that stretch reads CPECGQVVYRKDLIDNCSVCSNC.

It belongs to the AccD/PCCB family. Acetyl-CoA carboxylase is a heterohexamer composed of biotin carboxyl carrier protein (AccB), biotin carboxylase (AccC) and two subunits each of ACCase subunit alpha (AccA) and ACCase subunit beta (AccD). Requires Zn(2+) as cofactor.

Its subcellular location is the cytoplasm. The catalysed reaction is N(6)-carboxybiotinyl-L-lysyl-[protein] + acetyl-CoA = N(6)-biotinyl-L-lysyl-[protein] + malonyl-CoA. Its pathway is lipid metabolism; malonyl-CoA biosynthesis; malonyl-CoA from acetyl-CoA: step 1/1. Functionally, component of the acetyl coenzyme A carboxylase (ACC) complex. Biotin carboxylase (BC) catalyzes the carboxylation of biotin on its carrier protein (BCCP) and then the CO(2) group is transferred by the transcarboxylase to acetyl-CoA to form malonyl-CoA. This Prochlorococcus marinus (strain NATL2A) protein is Acetyl-coenzyme A carboxylase carboxyl transferase subunit beta.